Here is a 99-residue protein sequence, read N- to C-terminus: UPF0235 protein ASA_3628 (99 aa).

This sequence belongs to the UPF0235 family.

The sequence is that of UPF0235 protein ASA_3628 from Aeromonas salmonicida (strain A449).